The chain runs to 302 residues: D-alanine--D-alanine ligase (302 aa).

Residues lysine 100 to glutamate 295 form the ATP-grasp domain. Glutamine 126–threonine 180 provides a ligand contact to ATP. Mg(2+)-binding residues include aspartate 250, glutamate 262, and asparagine 264.

It belongs to the D-alanine--D-alanine ligase family. Requires Mg(2+) as cofactor. Mn(2+) is required as a cofactor.

The protein localises to the cytoplasm. It carries out the reaction 2 D-alanine + ATP = D-alanyl-D-alanine + ADP + phosphate + H(+). The protein operates within cell wall biogenesis; peptidoglycan biosynthesis. Functionally, cell wall formation. In Maridesulfovibrio salexigens (strain ATCC 14822 / DSM 2638 / NCIMB 8403 / VKM B-1763) (Desulfovibrio salexigens), this protein is D-alanine--D-alanine ligase.